Reading from the N-terminus, the 363-residue chain is Protein RecA (363 aa).

Residue 78–85 (GPESGGKT) participates in ATP binding.

It belongs to the RecA family.

The protein resides in the cytoplasm. Can catalyze the hydrolysis of ATP in the presence of single-stranded DNA, the ATP-dependent uptake of single-stranded DNA by duplex DNA, and the ATP-dependent hybridization of homologous single-stranded DNAs. It interacts with LexA causing its activation and leading to its autocatalytic cleavage. Probably involved in base excision repair. Its function is as follows. Following severe irradiation (7 kGy of gamma irradiation) genomic DNA is fragmented. DNA is progressively degraded for the first 1.5 hours after IR, in a step promoted by RecA and counterbalanced by DNA Pol I and Pol III, followed by massive DNA synthesis and genome reassembly in the next hour. Optimal priming of DNA synthesis requires both RecA and RadA, Pol III initiates DNA synthesis while both Pol I and Pol III are required for its continuation. In the absence of RecA the majority of the chromosome is still reconstituted, via either single-strand annealing or non-homologous end joining. In Deinococcus radiodurans (strain ATCC 13939 / DSM 20539 / JCM 16871 / CCUG 27074 / LMG 4051 / NBRC 15346 / NCIMB 9279 / VKM B-1422 / R1), this protein is Protein RecA.